The chain runs to 146 residues: Hemoglobin subunit beta (146 aa).

Valine 1 is modified (N-acetylvaline). Positions 2–146 (NLTAAEKTQV…VANALAHKYH (145 aa)) constitute a Globin domain. Threonine 12 is modified (phosphothreonine). Lysine 59 bears the N6-acetyllysine mark. Residue histidine 63 coordinates heme b. An N6-acetyllysine modification is found at lysine 82. Position 92 (histidine 92) interacts with heme b. Cysteine 93 carries the post-translational modification S-nitrosocysteine. At lysine 144 the chain carries N6-acetyllysine.

This sequence belongs to the globin family. As to quaternary structure, heterotetramer of two alpha chains and two beta chains. In terms of tissue distribution, red blood cells.

Its function is as follows. Involved in oxygen transport from the lung to the various peripheral tissues. The polypeptide is Hemoglobin subunit beta (HBB) (Loxodonta africana (African elephant)).